Consider the following 235-residue polypeptide: Small ribosomal subunit protein uS2c (235 aa).

It belongs to the universal ribosomal protein uS2 family.

The protein localises to the plastid. The protein resides in the chloroplast. This Adiantum capillus-veneris (Maidenhair fern) protein is Small ribosomal subunit protein uS2c (rps2).